The sequence spans 213 residues: Probable GTP-binding protein EngB (213 aa).

The EngB-type G domain occupies 30 to 204 (EGFEVAFAGR…YTALAGWMEL (175 aa)). GTP contacts are provided by residues 38–45 (GRSNAGKS), 64–68 (GRTQL), 82–85 (DLPG), 149–152 (TKAD), and 182–185 (LFSA). The Mg(2+) site is built by Ser45 and Thr66.

This sequence belongs to the TRAFAC class TrmE-Era-EngA-EngB-Septin-like GTPase superfamily. EngB GTPase family. Mg(2+) serves as cofactor.

Its function is as follows. Necessary for normal cell division and for the maintenance of normal septation. This Pseudomonas fluorescens (strain SBW25) protein is Probable GTP-binding protein EngB.